Reading from the N-terminus, the 635-residue chain is Biosynthetic arginine decarboxylase (635 aa).

Residue lysine 100 is modified to N6-(pyridoxal phosphate)lysine. Valine 282–tyrosine 292 serves as a coordination point for substrate.

This sequence belongs to the Orn/Lys/Arg decarboxylase class-II family. SpeA subfamily. The cofactor is Mg(2+). Requires pyridoxal 5'-phosphate as cofactor.

It catalyses the reaction L-arginine + H(+) = agmatine + CO2. It functions in the pathway amine and polyamine biosynthesis; agmatine biosynthesis; agmatine from L-arginine: step 1/1. Its function is as follows. Catalyzes the biosynthesis of agmatine from arginine. The sequence is that of Biosynthetic arginine decarboxylase from Geobacter metallireducens (strain ATCC 53774 / DSM 7210 / GS-15).